Reading from the N-terminus, the 410-residue chain is Neuroserpin (410 aa).

The N-terminal stretch at 1–16 is a signal peptide; it reads MAYLGLLSLVALQSLV. S83 bears the Phosphoserine mark. Residues N157, N321, and N401 are each glycosylated (N-linked (GlcNAc...) asparagine). S403 carries an O-linked (Xyl...) (chondroitin sulfate) serine glycan.

This sequence belongs to the serpin family. Detected in adult pituitary and adrenal gland.

It is found in the secreted. It localises to the cytoplasmic vesicle. The protein localises to the secretory vesicle lumen. The protein resides in the perikaryon. Its function is as follows. Serine protease inhibitor that inhibits plasminogen activators and plasmin but not thrombin. May be involved in the formation or reorganization of synaptic connections as well as for synaptic plasticity in the adult nervous system. May protect neurons from cell damage by tissue-type plasminogen activator. The polypeptide is Neuroserpin (Serpini1) (Rattus norvegicus (Rat)).